The sequence spans 419 residues: Acetyl transferase GW6a (419 aa).

The 199-residue stretch at 12 to 210 (VRVREFDVEK…GHPVHAHRLP (199 aa)) folds into the N-acetyltransferase domain. Positions 44–68 (VHDHADDGDGAAAKEKKKTKTKTKK) are disordered. Basic residues predominate over residues 58–68 (EKKKTKTKTKK).

The protein belongs to the acetyltransferase family. Interacts (via C-terminus) with HDR3 (via N-terminus). In terms of processing, ubiquitinated at Lys-63 by HDR3. Polyubiquitination of GW6A delays its degradation by the 26S proteasome and enhances GW6A histone acetyltransferase activity. As to expression, expressed in roots, leaf blades, leaf sheaths, shoot apical meristem and young panicles.

Its subcellular location is the nucleus. In terms of biological role, possesses intrinsic histone acetyltransferase activity and acts as a positive regulator of grain weight, hull size, yield, and plant biomass. Regulates postitively grain weight and yield by enlarging spikelet hulls via increasing cell number and accelerating grain filling. In vitro, catalyzes the acetylation of histone H4 at Lys-6 (H4K5ac), Lys-13 (H4K12ac) and Lys-17 (H4K16ac). Involved in the regulation of plastochron (the time interval between leaf initiation event). The polypeptide is Acetyl transferase GW6a (Oryza sativa subsp. japonica (Rice)).